We begin with the raw amino-acid sequence, 669 residues long: DNA mismatch repair protein MutL (669 aa).

Disordered stretches follow at residues 354 to 402 and 448 to 479; these read NRPA…ENPY and TVSH…PLES. Over residues 448 to 468 the composition is skewed to polar residues; that stretch reads TVSHDSPPNRTAPDATTSSSK.

It belongs to the DNA mismatch repair MutL/HexB family.

In terms of biological role, this protein is involved in the repair of mismatches in DNA. It is required for dam-dependent methyl-directed DNA mismatch repair. May act as a 'molecular matchmaker', a protein that promotes the formation of a stable complex between two or more DNA-binding proteins in an ATP-dependent manner without itself being part of a final effector complex. The polypeptide is DNA mismatch repair protein MutL (Pectobacterium carotovorum subsp. carotovorum (strain PC1)).